The sequence spans 186 residues: MSAQIVPAPEHVCYVHCNFCNTIFAVSVPSNSMLNIVTVRCGHCTSLLSVNLRGLVQALPAEDHLQDNLKMHNMSFRENYSEYGSSSRYGRVPMMFSKNDTEHMLHVRPPEKRQRVPSAYNRFIKEEIRRIKANNPDISHREAFSTAAKNWAHFPNIHFGLGSHESSKKLDEAIGAPSPQKVQRLY.

The C4-type zinc-finger motif lies at 17–44 (CNFCNTIFAVSVPSNSMLNIVTVRCGHC).

Belongs to the YABBY family. As to expression, expressed in leaf blades, leaf sheaths and flowers.

Its subcellular location is the nucleus. This Oryza sativa subsp. japonica (Rice) protein is Protein YABBY 2 (YAB2).